Reading from the N-terminus, the 673-residue chain is Hemocyanin subunit C (673 aa).

Residues 1–20 form the signal peptide; that stretch reads MGAWKVWTFFAIALVVAVKA. Cu cation is bound by residues His207, His211, and His237. N-linked (GlcNAc...) asparagine glycosylation is present at Asn323. Positions 358, 362, and 398 each coordinate Cu cation. Cys568 and Cys616 are joined by a disulfide.

This sequence belongs to the tyrosinase family. Hemocyanin subfamily. 36-chain polymer consisting of 6 hexamers, each of which includes 4 different chains, A, B, C and D. As to expression, hemolymph.

Its subcellular location is the secreted. It localises to the extracellular space. Functionally, hemocyanins are copper-containing oxygen carriers occurring freely dissolved in the hemolymph of many mollusks and arthropods. The protein is Hemocyanin subunit C (HCC) of Scutigera coleoptrata (House centipede).